We begin with the raw amino-acid sequence, 154 residues long: Glycosylation-dependent cell adhesion molecule 1 (154 aa).

Residues 1-18 (MKFLCILLLASLAATSLA) form the signal peptide. Thr34 carries O-linked (GalNAc...) threonine; partial glycosylation. 5 positions are modified to phosphoserine: Ser48, Ser53, Ser57, Ser59, and Ser65. Over residues 51–65 (DLSKEPSISREDLIS) the composition is skewed to basic and acidic residues. Residues 51-115 (DLSKEPSISR…EHAPSDASTT (65 aa)) form a disordered region. The N-linked (GlcNAc...) asparagine glycan is linked to Asn96.

This sequence belongs to the PP3/GlyCAM-1 family. In terms of tissue distribution, highly and specifically expressed in the lactating mammary gland.

It localises to the membrane. The protein is Glycosylation-dependent cell adhesion molecule 1 (GLYCAM1) of Capra hircus (Goat).